A 455-amino-acid polypeptide reads, in one-letter code: Probable xyloglucan galactosyltransferase GT17 (455 aa).

The Cytoplasmic portion of the chain corresponds to 1–34 (MTFNKRQVKINHWPEKNDKEKQKYSKNRETVKLT). A helical; Signal-anchor for type II membrane protein transmembrane segment spans residues 35–55 (LLTLLLLCSICFLFLTLNFPF). Over 56-455 (TIEFTASIPR…QARDNVVVSL (400 aa)) the chain is Lumenal. 5 N-linked (GlcNAc...) asparagine glycosylation sites follow: Asn-70, Asn-169, Asn-230, Asn-390, and Asn-426.

This sequence belongs to the glycosyltransferase 47 family. Expressed in roots and hypocotyls.

It is found in the golgi apparatus membrane. In terms of biological role, functions in xyloglucan synthesis by adding side chains to the xylosylated glucan backbone. Involved in the galactosylation of hemicellulose xyloglucan. The chain is Probable xyloglucan galactosyltransferase GT17 from Arabidopsis thaliana (Mouse-ear cress).